The following is a 269-amino-acid chain: 4-hydroxy-tetrahydrodipicolinate reductase (269 aa).

Residues 8-13 (GVAGRM), 98-100 (GTT), and 122-125 (APNM) contribute to the NAD(+) site. The Proton donor/acceptor role is filled by His156. A (S)-2,3,4,5-tetrahydrodipicolinate-binding site is contributed by His157. Residue Lys160 is the Proton donor of the active site. 166–167 (GT) is a binding site for (S)-2,3,4,5-tetrahydrodipicolinate.

This sequence belongs to the DapB family.

It localises to the cytoplasm. It catalyses the reaction (S)-2,3,4,5-tetrahydrodipicolinate + NAD(+) + H2O = (2S,4S)-4-hydroxy-2,3,4,5-tetrahydrodipicolinate + NADH + H(+). The enzyme catalyses (S)-2,3,4,5-tetrahydrodipicolinate + NADP(+) + H2O = (2S,4S)-4-hydroxy-2,3,4,5-tetrahydrodipicolinate + NADPH + H(+). It participates in amino-acid biosynthesis; L-lysine biosynthesis via DAP pathway; (S)-tetrahydrodipicolinate from L-aspartate: step 4/4. Catalyzes the conversion of 4-hydroxy-tetrahydrodipicolinate (HTPA) to tetrahydrodipicolinate. The protein is 4-hydroxy-tetrahydrodipicolinate reductase of Chromohalobacter salexigens (strain ATCC BAA-138 / DSM 3043 / CIP 106854 / NCIMB 13768 / 1H11).